A 434-amino-acid chain; its full sequence is Enolase (434 aa).

Substrate contacts are provided by H158 and E167. E210 acts as the Proton donor in catalysis. Residues D245, E294, and D319 each coordinate Mg(2+). E294 and D319 together coordinate substrate. Catalysis depends on K344, which acts as the Proton acceptor. Substrate is bound by residues 371–374 (SHRS) and K395.

Belongs to the enolase family. As to quaternary structure, homodimer. It depends on Mg(2+) as a cofactor.

It is found in the cytoplasm. It carries out the reaction (2R)-2-phosphoglycerate = phosphoenolpyruvate + H2O. It functions in the pathway carbohydrate degradation; glycolysis; pyruvate from D-glyceraldehyde 3-phosphate: step 4/5. The chain is Enolase from Doryteuthis pealeii (Longfin inshore squid).